Consider the following 141-residue polypeptide: Large ribosomal subunit protein uL11 (141 aa).

It belongs to the universal ribosomal protein uL11 family. As to quaternary structure, part of the ribosomal stalk of the 50S ribosomal subunit. Interacts with L10 and the large rRNA to form the base of the stalk. L10 forms an elongated spine to which L12 dimers bind in a sequential fashion forming a multimeric L10(L12)X complex. Post-translationally, one or more lysine residues are methylated.

In terms of biological role, forms part of the ribosomal stalk which helps the ribosome interact with GTP-bound translation factors. This Natranaerobius thermophilus (strain ATCC BAA-1301 / DSM 18059 / JW/NM-WN-LF) protein is Large ribosomal subunit protein uL11.